The sequence spans 302 residues: Ribosome-binding factor PSRP1, chloroplastic (302 aa).

The N-terminal 66 residues, 1-66 (MATLCTSAIN…SRNKPNVVCM (66 aa)), are a transit peptide targeting the chloroplast.

In terms of assembly, binds to the mRNA channel of the chloroplast small ribosomal subunit and interacts with 16S sRNA nucleotides at the A-site and P-site.

The protein resides in the plastid. It is found in the chloroplast stroma. In terms of biological role, ribosome-binding factor involved in light- and temperature-dependent control of protein synthesis. Interacts with 16S sRNA nucleotides at the A-site and P-site, where it protects the decoding center and inhibits translation by preventing tRNA binding. Stabilizes 70S ribosomes against dissociation. May be recycled by the combined action of ribosome-recycling factor (RRF) and EF-G. This is Ribosome-binding factor PSRP1, chloroplastic (PSRP1) from Spinacia oleracea (Spinach).